The following is a 348-amino-acid chain: Ileal sodium/bile acid cotransporter (348 aa).

At 1 to 28 (MDNSSICNPNATICEGDSCIAPESNFNA) the chain is on the extracellular side. Asn-3 and Asn-10 each carry an N-linked (GlcNAc...) asparagine glycan. A helical membrane pass occupies residues 29-49 (ILSVVMSTVLTILLALVMFSM). Over 50-81 (GCNVELHKFLGHLRRPWGIVVGFLCQFGIMPL) the chain is Cytoplasmic. A helical membrane pass occupies residues 82–102 (TGFVLSVAFGILPVQAVVVLI). At 103 to 126 (QGCCPGGTASNILAYWVDGDMDLS) the chain is on the extracellular side. The chain crosses the membrane as a helical span at residues 127-147 (VSMTTCSTLLALGMMPLCLFI). Residues 148–157 (YTKMWVDSGT) lie on the Cytoplasmic side of the membrane. Residues 158–178 (IVIPYDSIGTSLVALVIPVSI) form a helical membrane-spanning segment. At 179–195 (GMYVNHKWPQKAKIILK) the chain is on the extracellular side. Residues 196-216 (IGSIAGAILIVLIAVVGGILY) form a helical membrane-spanning segment. Residues 217–224 (QSAWTIEP) lie on the Cytoplasmic side of the membrane. Residues 225 to 245 (KLWIIGTIYPIAGYGLGFFLA) form a helical membrane-spanning segment. The Extracellular portion of the chain corresponds to 246–284 (RIAGQPWYRCRTVALETGLQNTQLCSTIVQLSFSPEDLN). Residues 285-305 (LVFTFPLIYSIFQIAFAAILL) form a helical membrane-spanning segment. Topologically, residues 306–348 (GAYVAYKKCHGKNNTELQEKTDNEMEPRSSFQETNKGFQPDEK) are cytoplasmic. Positions 322-332 (LQEKTDNEMEP) are enriched in basic and acidic residues. Positions 322-348 (LQEKTDNEMEPRSSFQETNKGFQPDEK) are disordered. A Phosphoserine modification is found at Ser-335.

Belongs to the bile acid:sodium symporter (BASS) (TC 2.A.28) family. As to quaternary structure, monomer and homodimer. Mainly expressed in ileum and kidney, lower expression in jejunum.

The protein resides in the membrane. The catalysed reaction is taurocholate(out) + 2 Na(+)(out) = taurocholate(in) + 2 Na(+)(in). It catalyses the reaction cholate(out) + 2 Na(+)(out) = cholate(in) + 2 Na(+)(in). It carries out the reaction taurochenodeoxycholate(out) + 2 Na(+)(out) = taurochenodeoxycholate(in) + 2 Na(+)(in). The enzyme catalyses tauroursodeoxycholate(out) + 2 Na(+)(out) = tauroursodeoxycholate(in) + 2 Na(+)(in). The catalysed reaction is glycocholate(out) + 2 Na(+)(out) = glycocholate(in) + 2 Na(+)(in). It catalyses the reaction tauronorcholate(out) + 2 Na(+)(out) = tauronorcholate(in) + 2 Na(+)(in). It carries out the reaction tauroallocholate(out) + 2 Na(+)(out) = tauroallocholate(in) + 2 Na(+)(in). The enzyme catalyses taurodeoxycholate(out) + 2 Na(+)(out) = taurodeoxycholate(in) + 2 Na(+)(in). The catalysed reaction is tauro-beta-muricholate(out) + 2 Na(+)(out) = tauro-beta-muricholate(in) + 2 Na(+)(in). In terms of biological role, plays a critical role in the sodium-dependent reabsorption of bile acids from the lumen of the small intestine. Transports various bile acids, unconjugated or conjugated, such as cholate and taurocholate. Also responsible for bile acid transport in the renal proximal tubules, a salvage mechanism that helps conserve bile acids. Works collaboratively with the Na(+)-taurocholate cotransporting polypeptide (NTCP), the organic solute transporter (OST), and the bile salt export pump (BSEP), to ensure efficacious biological recycling of bile acids during enterohepatic circulation. In Cricetulus griseus (Chinese hamster), this protein is Ileal sodium/bile acid cotransporter (SLC10A2).